A 169-amino-acid chain; its full sequence is MTAGRRMEMLCAGRVPALLLCLGFHLLQAVLSTTVIPSCIPGESSDNCTALVQTEDNPRVAQVSITKCSSDMNGYCLHGQCIYLVDMSQNYCRCEVGYTGVRCEHFFLTVHQPLSKEYVALTVILIILFLITVVGSTYYFCRWYRNRKSKEPKKEYERVTSGDPELPQV.

Residues 1–29 form the signal peptide; it reads MTAGRRMEMLCAGRVPALLLCLGFHLLQA. The propeptide occupies 30 to 62; the sequence is VLSTTVIPSCIPGESSDNCTALVQTEDNPRVAQ. A glycan (N-linked (GlcNAc...) asparagine) is linked at asparagine 47. At 60 to 119 the chain is on the extracellular side; the sequence is VAQVSITKCSSDMNGYCLHGQCIYLVDMSQNYCRCEVGYTGVRCEHFFLTVHQPLSKEYV. The region spanning 64–104 is the EGF-like domain; it reads SITKCSSDMNGYCLHGQCIYLVDMSQNYCRCEVGYTGVRCE. Cystine bridges form between cysteine 68–cysteine 81, cysteine 76–cysteine 92, and cysteine 94–cysteine 103. A propeptide spans 109-169 (removed in mature form); that stretch reads TVHQPLSKEY…TSGDPELPQV (61 aa). The helical transmembrane segment at 120–140 threads the bilayer; the sequence is ALTVILIILFLITVVGSTYYF. At 141 to 169 the chain is on the cytoplasmic side; the sequence is CRWYRNRKSKEPKKEYERVTSGDPELPQV.

As to quaternary structure, interacts with EGFR and ERBB4. As to expression, in normal adults, expressed predominantly in the placenta and peripheral blood leukocytes. High levels were detected in carcinomas of the bladder, lung, kidney and colon.

Its subcellular location is the secreted. It is found in the extracellular space. It localises to the cell membrane. Functionally, ligand of the EGF receptor/EGFR and ERBB4. Stimulates EGFR and ERBB4 tyrosine phosphorylation. Contributes to inflammation, wound healing, tissue repair, and oocyte maturation by regulating angiogenesis and vascular remodeling and by stimulating cell proliferation. The polypeptide is Proepiregulin (EREG) (Homo sapiens (Human)).